Here is a 275-residue protein sequence, read N- to C-terminus: Large ribosomal subunit protein uL2 (275 aa).

The interval 221 to 275 (RGTAMNPVDHPHGGGEGRTGEGRVPVNPWGQPTKGYRTRSNKRTNSMIVQRRHKR) is disordered. Positions 229–241 (DHPHGGGEGRTGE) are enriched in basic and acidic residues.

The protein belongs to the universal ribosomal protein uL2 family. Part of the 50S ribosomal subunit. Forms a bridge to the 30S subunit in the 70S ribosome.

One of the primary rRNA binding proteins. Required for association of the 30S and 50S subunits to form the 70S ribosome, for tRNA binding and peptide bond formation. It has been suggested to have peptidyltransferase activity; this is somewhat controversial. Makes several contacts with the 16S rRNA in the 70S ribosome. The chain is Large ribosomal subunit protein uL2 from Dechloromonas aromatica (strain RCB).